We begin with the raw amino-acid sequence, 222 residues long: Adenylate kinase (222 aa).

An ATP-binding site is contributed by 16–21; sequence GAGKGT. The segment at 36 to 65 is NMP; it reads ATGDMLRSQISKGTELGLQAKKIMDQGGLV. AMP-binding positions include T37, R42, 63–65, 92–95, and Q99; these read GLV and GFPR. The segment at 133-170 is LID; that stretch reads GRLIHPASGRSYHKLFNPPKEDMKDDVTGEPLVQRSDD. ATP-binding positions include R134 and 143–144; that span reads SY. Residues R167 and R178 each coordinate AMP. Residue Q206 participates in ATP binding.

This sequence belongs to the adenylate kinase family. AK2 subfamily. As to quaternary structure, monomer.

The protein localises to the cytoplasm. It is found in the cytosol. Its subcellular location is the mitochondrion intermembrane space. The enzyme catalyses AMP + ATP = 2 ADP. Catalyzes the reversible transfer of the terminal phosphate group between ATP and AMP. Plays an important role in cellular energy homeostasis and in adenine nucleotide metabolism. Adenylate kinase activity is critical for regulation of the phosphate utilization and the AMP de novo biosynthesis pathways. In Candida glabrata (strain ATCC 2001 / BCRC 20586 / JCM 3761 / NBRC 0622 / NRRL Y-65 / CBS 138) (Yeast), this protein is Adenylate kinase.